Reading from the N-terminus, the 106-residue chain is MAGKTVTRADLSEAVYHQVGLSRTESAALVETVLSEICSCLASGETVKLSSFGSFVVRSKGKRVGRNPKTGVEVAIEPRQVMVFKPSNVLKAKINGLNGAGEHDDD.

This sequence belongs to the bacterial histone-like protein family. As to quaternary structure, heterodimer of an alpha and a beta chain.

This protein is one of the two subunits of integration host factor, a specific DNA-binding protein that functions in genetic recombination as well as in transcriptional and translational control. This is Integration host factor subunit alpha from Methylobacterium radiotolerans (strain ATCC 27329 / DSM 1819 / JCM 2831 / NBRC 15690 / NCIMB 10815 / 0-1).